The following is a 1203-amino-acid chain: Potassium/sodium hyperpolarization-activated cyclic nucleotide-gated channel 4 (1203 aa).

Positions 1-182 are disordered; it reads MDKLPPSMRK…QPASASCEQP (182 aa). The Cytoplasmic portion of the chain corresponds to 1 to 263; that stretch reads MDKLPPSMRK…IIHPYSDFRF (263 aa). Over residues 26–36 the composition is skewed to acidic residues; sequence MDEEEDAEEEG. Residues 105–117 are compositionally biased toward gly residues; the sequence is SRGGGSGGTGSGS. Residues 121–133 show a composition bias toward basic and acidic residues; it reads HLHDSAEERRLIA. Ser138 carries the post-translational modification Phosphoserine. The span at 163–174 shows a compositional bias: pro residues; the sequence is ASPPPPQQPPQP. The tract at residues 209 to 260 is involved in subunit assembly; the sequence is GQAGFMQRQFGAMLQPGVNKFSLRMFGSQKAVEREQERVKSAGFWIIHPYSD. A helical membrane pass occupies residues 264–286; that stretch reads YWDLTMLLLMVGNLIIIPVGITF. Over 287 to 293 the chain is Extracellular; the sequence is FKDENTT. The chain crosses the membrane as a helical span at residues 294 to 314; that stretch reads PWIVFNVVSDTFFLIDLVLNF. Residues 315 to 336 lie on the Cytoplasmic side of the membrane; it reads RTGIVVEDNTEIILDPQRIKMK. A helical membrane pass occupies residues 337–359; that stretch reads YLKSWFMVDFISSIPVDYIFLIV. At 360–378 the chain is on the extracellular side; the sequence is ETRIDSEVYKTARALRIVR. The chain crosses the membrane as a helical; Voltage-sensor span at residues 379–399; that stretch reads FTKILSLLRLLRLSRLIRYIH. Residues 400–413 lie on the Cytoplasmic side of the membrane; the sequence is QWEEIFHMTYDLAS. Residues 414-436 traverse the membrane as a helical segment; the sequence is AVVRIVNLIGMMLLLCHWDGCLQ. The Extracellular portion of the chain corresponds to 437–464; sequence FLVPMLQDFPDDCWVSINNMVNNSWGKQ. Residue Asn458 is glycosylated (N-linked (GlcNAc...) asparagine). Residues 465 to 486 constitute an intramembrane region (pore-forming); that stretch reads YSYALFKAMSHMLCIGYGRQAP. The Extracellular segment spans residues 487–491; it reads VGMSD. Residues 492–517 traverse the membrane as a helical segment; sequence VWLTMLSMIVGATCYAMFIGHATALI. Residues 518 to 1203 lie on the Cytoplasmic side of the membrane; that stretch reads QSLDSSRRQY…PVRSKLPSNL (686 aa). 3',5'-cyclic GMP contacts are provided by Tyr559, Lys562, Phe564, and Glu566. 3',5'-cyclic AMP is bound by residues Gly659, Glu660, Cys662, Arg669, Thr670, Val673, and Arg710. Disordered regions lie at residues 836–856, 870–897, and 918–1203; these read ALGS…SSSS, GLSP…TPSA, and LSSS…PSNL. Composition is skewed to low complexity over residues 918 to 941 and 966 to 986; these read LSSS…AAQP and RSPS…SLGL. Pro residues predominate over residues 995-1004; sequence ETPPRQPEPP. The span at 1005–1028 shows a compositional bias: low complexity; it reads SLVAGASGGASPVGFTPRGGLSPP. The segment covering 1029 to 1042 has biased composition (pro residues); the sequence is GHSPGPPRTFPSAP. Over residues 1045–1056 the composition is skewed to low complexity; the sequence is ASGSHGSLLLPP. Ser1105 and Ser1108 each carry phosphoserine. Over residues 1122 to 1137 the composition is skewed to gly residues; it reads AGGGSGGSGSSGGLGP.

Belongs to the potassium channel HCN family. In terms of assembly, homotetramer. The channel assemble into homotetramers or heteromeric complexes that contains of four pore-forming subunits. Interacts with PEX5L with a 4:4 HCN4:PEX5L stoichiometry; reduces the effects of cAMP on the voltage-dependence and rate of activation. Interacts with IRAG1; regulates HCN4 channel activity. Interacts with IRAG2; regulates HCN4 channel activity. In terms of processing, S-palmitoylated. As to expression, highly expressed in thalamus, testis and in heart, both in ventricle and atrium. Detected at much lower levels in amygdala, substantia nigra, cerebellum and hippocampus.

The protein resides in the cell membrane. The catalysed reaction is K(+)(in) = K(+)(out). The enzyme catalyses Na(+)(in) = Na(+)(out). Activated by cAMP and to a lesser extent by cGMP and cCMP. cAMP binding causes a conformation change that leads to the assembly of an active tetramer and channel opening. Binding of cAMP removes a tonic inhibition conferred by cyclic nucleotide-binding domain (CNBD) on channel opening. Cyclic dinucleotides can modulate HCN4 channel; cyclic dinucleotides acting as potent antagonists of cAMP. Inhibited by extracellular Cs(+) ions. Auxiliary subunits can also regulate HCN4 channel. IRAG1 causes a gain-of-function by shifting HCN4 activation to more depolarized membrane potentials in the absence of cAMP. In contrast, IRAG2 causes a loss-of-function by inhibiting cAMP-dependent potentiation of HCN4 activation. Hyperpolarization-activated ion channel that are permeable to Na(+) and K(+) ions with very slow activation and inactivation. Exhibits higher selectivity for K(+) over Na(+) ions. Contributes to the native pacemaker currents in heart (If) that regulate the rhythm of heart beat. Contributes to the native pacemaker currents in neurons (Ih). May mediate responses to sour stimuli. This is Potassium/sodium hyperpolarization-activated cyclic nucleotide-gated channel 4 from Homo sapiens (Human).